Here is a 106-residue protein sequence, read N- to C-terminus: Minor capsid protein VP2 (106 aa).

It belongs to the vesivirus VP2 protein family. Homooligomer. The portal-like structure consists in 12 copies of VP2. Interacts with capsid protein VP1.

Its subcellular location is the virion. It is found in the host cytoplasm. Minor structural protein that forms a portal-like structure at a unique three-fold axis of symmetry, following binding to the host receptor. The virion attaches to feline junctional adhesion molecule A (F11R). Once attached, the virion is endocytosed. Acidification of the endosome induces conformational change of capsid protein thereby injecting virus genomic RNA into host cytoplasm. The channel formed by VP2 may allow the delivery of the viral genome through the host endosomal membrane. The sequence is that of Minor capsid protein VP2 from Feline calicivirus (strain CFI/68 FIV) (FCV).